A 207-amino-acid polypeptide reads, in one-letter code: Large ribosomal subunit protein uL4 (207 aa).

Positions 48 to 89 (THKVKNRSEVSGGGRKPWRQKGTGRARQGSIRSPQWRGGGTV) are disordered.

The protein belongs to the universal ribosomal protein uL4 family. Part of the 50S ribosomal subunit.

In terms of biological role, one of the primary rRNA binding proteins, this protein initially binds near the 5'-end of the 23S rRNA. It is important during the early stages of 50S assembly. It makes multiple contacts with different domains of the 23S rRNA in the assembled 50S subunit and ribosome. Forms part of the polypeptide exit tunnel. The protein is Large ribosomal subunit protein uL4 of Bacillus cytotoxicus (strain DSM 22905 / CIP 110041 / 391-98 / NVH 391-98).